A 378-amino-acid chain; its full sequence is Beta-1,3-galactosyltransferase pvg3 (378 aa).

The Cytoplasmic segment spans residues 1-8 (MFSNSKKK). A helical; Signal-anchor for type II membrane protein transmembrane segment spans residues 9–29 (IFLYVLIAGVATFSFAFLVLN). Residues 30–378 (RLQAEEHSLA…ATIPLPSLDV (349 aa)) lie on the Lumenal side of the membrane. N-linked (GlcNAc...) asparagine glycosylation is found at N53, N97, N180, and N354.

It belongs to the glycosyltransferase 31 family.

The protein resides in the endoplasmic reticulum membrane. Its subcellular location is the golgi apparatus. It is found in the golgi stack membrane. The catalysed reaction is 3-O-(beta-D-galactosyl-(1-&gt;4)-beta-D-xylosyl)-L-seryl-[protein] + UDP-alpha-D-galactose = 3-O-(beta-D-galactosyl-(1-&gt;3)-beta-D-galactosyl-(1-&gt;4)-beta-D-xylosyl)-L-seryl-[protein] + UDP + H(+). In terms of biological role, involved in cell wall biogenesis. Has a role in the addition of Gal-beta1,3 moeities to galactomannans and their subsequent pyruvylation. Has a role in meiosis. The chain is Beta-1,3-galactosyltransferase pvg3 (pvg3) from Schizosaccharomyces pombe (strain 972 / ATCC 24843) (Fission yeast).